We begin with the raw amino-acid sequence, 876 residues long: MKKLKASEIRQKYLDFFVEKGHMVEPSAPLVPIDDDTLLWINSGVATLKKYFDGRETPKKPRIVNSQKAIRTNDIENVGFTARHHTFFEMLGNFSIGDYFKQEAIEFAWEFLTSDKWMGMEPDKLYVTIHPEDMEAYNIWHKDIGLEESRIIRIEGNFWDIGEGPSGPNTEIFYDRGEAYGQDDPAEEMYPGGENERYLEVWNLVFSEFNHNKDHSYTPLPNKNIDTGMGLERMASVSQNVRTNYETDLFMPIMNEIEKVSGKQYLVNNEQDVAFKVIADHIRTIAFAISDGALPANEGRGYVLRRLLRRAVRFSQTLGINEPFMYKLVDIVADIMEPYYPNVKEKADFIKRVIKSEEERFHETLEDGLAILNELIKKAKATTNEINGKDAFKLYDTYGFPIELTEEIAVQAGLKVDMTTFESEMQQQRDRARQARQNSQSMQVQSEVLKNITSASTFVGYDTATAQTTLTHLIYNGEEVSQVEAGETVYFMLTETPFYAVSGGQVADTGIVYNDNFEIAVSEVTKAPNGQNLHKGVVQFGQVNVGATVSAEVNQNDRRDIQKNHSATHLLHAALKSVLGDHVNQAGSLVEADRLRFDFSHFGPMTNDEIDQVERLVNEEIWKGIDVNIQEMDIASAKEMGAMALFGEKYGDVVRVVNMAPFSIELCGGIHVRNTSEIGLFKIVSESGTGAGVRRIEALTGKAAFLYLEDIQEKFNTMKSQLKVKSDDQVVDKLTQLQDEEKALLKQLEQRDKEITSLKMGNIENQVEEINGYKVLVTEVDVPNAKAIRSTMDDFKSKLQDTIIILASNVDDKVSMVATVPKSLTNNVKAGDLIKQMAPIVGGKGGGRPDMAQGGGTQPENISKSLSFIKDYIKNL.

Zn(2+) is bound by residues histidine 565, histidine 569, cysteine 667, and histidine 671.

It belongs to the class-II aminoacyl-tRNA synthetase family. The cofactor is Zn(2+).

The protein localises to the cytoplasm. The enzyme catalyses tRNA(Ala) + L-alanine + ATP = L-alanyl-tRNA(Ala) + AMP + diphosphate. Its function is as follows. Catalyzes the attachment of alanine to tRNA(Ala) in a two-step reaction: alanine is first activated by ATP to form Ala-AMP and then transferred to the acceptor end of tRNA(Ala). Also edits incorrectly charged Ser-tRNA(Ala) and Gly-tRNA(Ala) via its editing domain. This chain is Alanine--tRNA ligase, found in Staphylococcus aureus (strain MSSA476).